A 228-amino-acid chain; its full sequence is MEIKEMVTSEMPRERLLSHGAKSLSNTELLAILINTGRKGFLSIDISNELLKSASNLNELKKSSINDLIQVKGIGLQKAITLKAAFELGERMGRRAENNRIKITQPSDVADYMIPTMKDLTQEHFVILLLNSKNVVIKESCVFKGTLNSSIVHPREIFSIAVRENANAIIAVHNHPSGDVTPSQEDIITTMRLKESGLILGIDLLDHIIIGDNRFTSLVEAGYFDEND.

The MPN domain occupies 102-224; sequence KITQPSDVAD…FTSLVEAGYF (123 aa). Zn(2+) contacts are provided by His-173, His-175, and Asp-186. The JAMM motif signature appears at 173–186; that stretch reads HNHPSGDVTPSQED.

This sequence belongs to the UPF0758 family.

This Staphylococcus aureus (strain bovine RF122 / ET3-1) protein is UPF0758 protein SAB1521c.